The chain runs to 288 residues: Pyridoxal kinase PdxY (288 aa).

Substrate contacts are provided by residues Ser12 and Thr47 to Gln48. ATP is bound by residues Asp114, Glu151, Lys184, and Arg211–Leu214. Asp225 lines the substrate pocket.

The protein belongs to the pyridoxine kinase family. PdxY subfamily. As to quaternary structure, homodimer. Mg(2+) serves as cofactor.

It catalyses the reaction pyridoxal + ATP = pyridoxal 5'-phosphate + ADP + H(+). It functions in the pathway cofactor metabolism; pyridoxal 5'-phosphate salvage; pyridoxal 5'-phosphate from pyridoxal: step 1/1. In terms of biological role, pyridoxal kinase involved in the salvage pathway of pyridoxal 5'-phosphate (PLP). Catalyzes the phosphorylation of pyridoxal to PLP. This chain is Pyridoxal kinase PdxY, found in Pseudomonas syringae pv. syringae (strain B728a).